The sequence spans 1168 residues: Homeodomain-interacting protein kinase 2 (1168 aa).

Ser-16 carries the post-translational modification Phosphoserine. Residue Lys-32 forms a Glycyl lysine isopeptide (Lys-Gly) (interchain with G-Cter in SUMO); alternate linkage. Residue Lys-32 forms a Glycyl lysine isopeptide (Lys-Gly) (interchain with G-Cter in SUMO2); alternate linkage. Positions 97–230 (SASSTSVTGQ…TNEIVAIKIL (134 aa)) are transcriptional corepression. Residues Ser-118 and Ser-135 each carry the phosphoserine modification. Phosphothreonine is present on Thr-141. The segment at 189-520 (HEVLCSMTNT…DADKRITPIE (332 aa)) is interaction with DAXX. One can recognise a Protein kinase domain in the interval 199-527 (YEVLEFLGRG…PIETLNHPFV (329 aa)). ATP contacts are provided by residues 205-213 (LGRGTFGQV) and Lys-228. 2 positions are modified to phosphothreonine: Thr-252 and Thr-273. Residue Asp-324 is the Proton acceptor of the active site. A Phosphotyrosine modification is found at Tyr-361. Residue Ser-441 is modified to Phosphoserine. Thr-482, Thr-517, and Thr-566 each carry phosphothreonine. The segment at 539-816 (THVKSCFQNM…KENTPPRCAM (278 aa)) is interaction with SKI and SMAD1. Residues 595–772 (PSAASMAAVA…MRQQPTSTTS (178 aa)) form an interaction with DAZAP2 region. 2 positions are modified to phosphoserine: Ser-607 and Ser-641. Residue Thr-660 is modified to Phosphothreonine. The interval 724-869 (RNTHAHGSHY…ITISSDTDEE (146 aa)) is interaction with POU4F1. Residues 746–848 (HVTLPAAQPL…TRERQRQTIV (103 aa)) are interaction with CTBP1. The tract at residues 759-869 (VAHVMRQQPT…ITISSDTDEE (111 aa)) is interaction with HMGA1. The interval 764–820 (RQQPTSTTSSRKSKQHQPSMRNVSTCEVTSSQSTSSPQRSKRVKENTPPRCAMVHSS) is disordered. Residues 765-791 (QQPTSTTSSRKSKQHQPSMRNVSTCEV) show a composition bias toward polar residues. Residues 774 to 777 (RKSK) carry the Nuclear localization signal 1 (NLS1) motif. Phosphoserine occurs at positions 787 and 799. A compositionally biased stretch (low complexity) spans 792–801 (TSSQSTSSPQ). Positions 804–807 (KRVK) match the Nuclear localization signal 2 (NLS2) motif. The tract at residues 812–907 (PRCAMVHSSP…YSDSSSNTSP (96 aa)) is interaction with TP53 and TP73. The interval 845–879 (QTIVIPDTPSPTVSVITISSDTDEEEEQKHAPTST) is interaction with UBE2I. A localization to nuclear speckles region spans residues 845-952 (QTIVIPDTPS…PLKTQASEVL (108 aa)). Positions 845-952 (QTIVIPDTPS…PLKTQASEVL (108 aa)) are required for localization to nuclear speckles. The segment at 854–876 (SPTVSVITISSDTDEEEEQKHAP) is interaction with UBL1. The tract at residues 856–880 (TVSVITISSDTDEEEEQKHAPTSTV) is SUMO interaction motifs (SIM); required for nuclear localization and kinase activity. Positions 894–936 (HDSPYSDSSSNTSPYSVQQRTGHNGTNTLDTKGALENHCTGNP) are disordered. The segment covering 895–909 (DSPYSDSSSNTSPYS) has biased composition (low complexity). The residue at position 906 (Ser-906) is a Phosphoserine. Positions 907–1022 (PYSVQQRTGH…LSQAQPHMAT (116 aa)) are interaction with AXIN1. Polar residues predominate over residues 910–923 (VQQRTGHNGTNTLD). Glycyl lysine isopeptide (Lys-Gly) (interchain with G-Cter in SUMO2) cross-links involve residues Lys-925 and Lys-945. The interval 956–1168 (DSLGPAVSTG…PAKVNQYPYI (213 aa)) is autoinhibitory domain (AID). The segment at 960-1030 (PAVSTGHHSS…ATDRTGSHRR (71 aa)) is disordered. The residue at position 963 (Ser-963) is a Phosphoserine. Composition is skewed to low complexity over residues 965–991 (GHHSSSFKCKSSSTVTSTSGHSSGSSS) and 998–1018 (QQRPGPHFQQQQPLNLSQAQP). Ser-1014, Ser-1125, and Ser-1158 each carry phosphoserine. Lys-1161 is covalently cross-linked (Glycyl lysine isopeptide (Lys-Gly) (interchain with G-Cter in SUMO)).

It belongs to the protein kinase superfamily. CMGC Ser/Thr protein kinase family. HIPK subfamily. Interacts with CREB1, SIAH1, WSB1, CBX4, TRADD, p53/TP53, TP73, TP63, CREBBP, DAXX, P53DINP1, SKI, SMAD1, SMAD2 and SMAD3, but not SMAD4. Interacts with ATF1, PML, RUNX1, EP300, NKX1-2, NKX2-5, UBE2I, HMGA1, CTBP1, AXIN1, NLK, MYB, POU4F1, POU4F2, POU4F3, UBE2I, UBL1 and ZBTB4. Probably part of a complex consisting of p53/TP53, HIPK2 and AXIN1. Interacts with SP100; positively regulates TP53-dependent transcription. Interacts with DAZAP2; the interaction results in phosphorylation of DAZAP2 which causes localization of DAZAP2 to the nucleus, reduces interaction of DAZAP2 with HIPK2 and prevents DAZAP2-dependent degradation of HIPK2. Interacts with SIAH1; the interaction is promoted by DAZAP2 and results in SIAH1-mediated ubiquitination and subsequent proteasomal degradation of HIPK2. Post-translationally, autophosphorylation at Tyr-361 in the activation loop activates the kinase and promotes nuclear localization. Sumoylated. When conjugated it is directed to nuclear speckles. Desumoylated by SENP1. Sumoylation on Lys-32 is promoted by the E3 SUMO-protein ligase CBX4. In terms of processing, ubiquitinated by FBXO3, WSB1 and SIAH1, leading to rapid proteasome-dependent degradation. The degradation mediated by FBXO3, but not ubiquitination, is prevented in the presence of PML. The degradation mediated by WSB1 and SIAH1 is reversibly reduced upon DNA damage. Post-translationally, cleaved at Asp-895 and Asp-956 by CASP6 in a p53/TP53-dependent manner. The cleaved form lacks the autoinhibitory C-terminal domain (AID), resulting in a hyperactive kinase, which potentiates p53/TP53 Ser-46 phosphorylation and subsequent activation of the cell death machinery.

The protein localises to the nucleus. Its subcellular location is the PML body. It localises to the cytoplasm. The catalysed reaction is L-seryl-[protein] + ATP = O-phospho-L-seryl-[protein] + ADP + H(+). It carries out the reaction L-threonyl-[protein] + ATP = O-phospho-L-threonyl-[protein] + ADP + H(+). In terms of biological role, serine/threonine-protein kinase involved in transcription regulation, p53/TP53-mediated cellular apoptosis and regulation of the cell cycle. Acts as a corepressor of several transcription factors, including SMAD1 and POU4F1/Brn3a and probably NK homeodomain transcription factors. Phosphorylates PDX1, ATF1, PML, p53/TP53, CREB1, CTBP1, CBX4, RUNX1, EP300, CTNNB1, HMGA1, ZBTB4 and DAZAP2. Inhibits cell growth and promotes apoptosis through the activation of p53/TP53 both at the transcription level and at the protein level (by phosphorylation and indirect acetylation). The phosphorylation of p53/TP53 may be mediated by a p53/TP53-HIPK2-AXIN1 complex. Involved in the response to hypoxia by acting as a transcriptional co-suppressor of HIF1A. Mediates transcriptional activation of TP73. In response to TGFB, cooperates with DAXX to activate JNK. Negative regulator through phosphorylation and subsequent proteasomal degradation of CTNNB1 and the antiapoptotic factor CTBP1. In the Wnt/beta-catenin signaling pathway acts as an intermediate kinase between MAP3K7/TAK1 and NLK to promote the proteasomal degradation of MYB. Phosphorylates CBX4 upon DNA damage and promotes its E3 SUMO-protein ligase activity. Activates CREB1 and ATF1 transcription factors by phosphorylation in response to genotoxic stress. In response to DNA damage, stabilizes PML by phosphorylation. PML, HIPK2 and FBXO3 may act synergically to activate p53/TP53-dependent transactivation. Promotes angiogenesis, and is involved in erythroid differentiation, especially during fetal liver erythropoiesis. Phosphorylation of RUNX1 and EP300 stimulates EP300 transcription regulation activity. Triggers ZBTB4 protein degradation in response to DNA damage. In response to DNA damage, phosphorylates DAZAP2 which localizes DAZAP2 to the nucleus, reduces interaction of DAZAP2 with HIPK2 and prevents DAZAP2-dependent ubiquitination of HIPK2 by E3 ubiquitin-protein ligase SIAH1 and subsequent proteasomal degradation. Modulates HMGA1 DNA-binding affinity. In response to high glucose, triggers phosphorylation-mediated subnuclear localization shifting of PDX1. Involved in the regulation of eye size, lens formation and retinal lamination during late embryogenesis. This is Homeodomain-interacting protein kinase 2 (Hipk2) from Mesocricetus auratus (Golden hamster).